A 305-amino-acid polypeptide reads, in one-letter code: tRNA dimethylallyltransferase (305 aa).

An ATP-binding site is contributed by 9-16; sequence GPTASGKS. 11 to 16 lines the substrate pocket; it reads TASGKS. The tract at residues 34 to 37 is interaction with substrate tRNA; the sequence is DSKQ.

The protein belongs to the IPP transferase family. In terms of assembly, monomer. It depends on Mg(2+) as a cofactor.

The catalysed reaction is adenosine(37) in tRNA + dimethylallyl diphosphate = N(6)-dimethylallyladenosine(37) in tRNA + diphosphate. Functionally, catalyzes the transfer of a dimethylallyl group onto the adenine at position 37 in tRNAs that read codons beginning with uridine, leading to the formation of N6-(dimethylallyl)adenosine (i(6)A). This is tRNA dimethylallyltransferase from Anaplasma marginale (strain St. Maries).